Consider the following 320-residue polypeptide: Cytochrome f (320 aa).

Positions 1-35 (MQTRNTFFWIKEQMTRSISVSIIVYVITQTSISNA) are cleaved as a signal peptide. Residues Tyr-36, Cys-56, Cys-59, and His-60 each coordinate heme. Residues 286–306 (VQGLLFFFASVILAQIFLVLK) traverse the membrane as a helical segment.

The protein belongs to the cytochrome f family. As to quaternary structure, the 4 large subunits of the cytochrome b6-f complex are cytochrome b6, subunit IV (17 kDa polypeptide, petD), cytochrome f and the Rieske protein, while the 4 small subunits are PetG, PetL, PetM and PetN. The complex functions as a dimer. Requires heme as cofactor.

Its subcellular location is the plastid. The protein resides in the chloroplast thylakoid membrane. Functionally, component of the cytochrome b6-f complex, which mediates electron transfer between photosystem II (PSII) and photosystem I (PSI), cyclic electron flow around PSI, and state transitions. In Buxus microphylla (Littleleaf boxwood), this protein is Cytochrome f.